Reading from the N-terminus, the 204-residue chain is ATP synthase subunit b 2 (204 aa).

Residues 8 to 28 (AQSSTTEGAEAHDAAAAGEVH) are disordered. The chain crosses the membrane as a helical span at residues 56 to 76 (LLWLAITFGLFYLLMSKVIIP).

Belongs to the ATPase B chain family. In terms of assembly, F-type ATPases have 2 components, F(1) - the catalytic core - and F(0) - the membrane proton channel. F(1) has five subunits: alpha(3), beta(3), gamma(1), delta(1), epsilon(1). F(0) has three main subunits: a(1), b(2) and c(10-14). The alpha and beta chains form an alternating ring which encloses part of the gamma chain. F(1) is attached to F(0) by a central stalk formed by the gamma and epsilon chains, while a peripheral stalk is formed by the delta and b chains.

The protein resides in the cell inner membrane. Its function is as follows. F(1)F(0) ATP synthase produces ATP from ADP in the presence of a proton or sodium gradient. F-type ATPases consist of two structural domains, F(1) containing the extramembraneous catalytic core and F(0) containing the membrane proton channel, linked together by a central stalk and a peripheral stalk. During catalysis, ATP synthesis in the catalytic domain of F(1) is coupled via a rotary mechanism of the central stalk subunits to proton translocation. Functionally, component of the F(0) channel, it forms part of the peripheral stalk, linking F(1) to F(0). The b'-subunit is a diverged and duplicated form of b found in plants and photosynthetic bacteria. The protein is ATP synthase subunit b 2 (atpF2) of Rhizobium meliloti (strain 1021) (Ensifer meliloti).